Consider the following 258-residue polypeptide: Regulatory protein RecX (258 aa).

Belongs to the RecX family.

It is found in the cytoplasm. Functionally, modulates RecA activity. The chain is Regulatory protein RecX from Streptococcus pneumoniae (strain P1031).